The primary structure comprises 202 residues: MADPRVEELPDEEVPKTNVEDAGSSSESEAGDEPTIPGGAAVTIHSRNEKKARKAIGKLGLKHVPGITRVTLRRPKNILFVINQPDVYRSPSSNTWIIFGEAKIEDLNATAQATAAQQLAEAAANEHAGHDHEHDHGKGKAPEAEAKKEEEEDDGEEVDESGLEAKDIELVMAQANVSRKKAVKALRENDNDIVNSIMALSI.

Residues 1–19 (MADPRVEELPDEEVPKTNV) are compositionally biased toward basic and acidic residues. Residues 1–42 (MADPRVEELPDEEVPKTNVEDAGSSSESEAGDEPTIPGGAAV) are disordered. The NAC-A/B domain occupies 46–111 (SRNEKKARKA…AKIEDLNATA (66 aa)). The span at 117–126 (QQLAEAAANE) shows a compositional bias: low complexity. Positions 117–165 (QQLAEAAANEHAGHDHEHDHGKGKAPEAEAKKEEEEDDGEEVDESGLEA) are disordered. Residues 127 to 149 (HAGHDHEHDHGKGKAPEAEAKKE) show a composition bias toward basic and acidic residues. Residues 150-162 (EEEDDGEEVDESG) show a composition bias toward acidic residues. The region spanning 163–202 (LEAKDIELVMAQANVSRKKAVKALRENDNDIVNSIMALSI) is the UBA domain.

It belongs to the NAC-alpha family. In terms of assembly, part of the nascent polypeptide-associated complex (NAC), consisting of egd2 and egd1. NAC associates with ribosomes via egd1.

The protein localises to the cytoplasm. Its subcellular location is the nucleus. Component of the nascent polypeptide-associated complex (NAC), a dynamic component of the ribosomal exit tunnel, protecting the emerging polypeptides from interaction with other cytoplasmic proteins to ensure appropriate nascent protein targeting. The NAC complex also promotes mitochondrial protein import by enhancing productive ribosome interactions with the outer mitochondrial membrane and blocks the inappropriate interaction of ribosomes translating non-secretory nascent polypeptides with translocation sites in the membrane of the endoplasmic reticulum. Egd2 may also be involved in transcription regulation. The chain is Nascent polypeptide-associated complex subunit alpha (egd2) from Aspergillus niger (strain ATCC MYA-4892 / CBS 513.88 / FGSC A1513).